Here is a 380-residue protein sequence, read N- to C-terminus: DNA replication and repair protein RecF (380 aa).

Position 30–37 (30–37 (GNNAQGKS)) interacts with ATP.

The protein belongs to the RecF family.

It localises to the cytoplasm. Its function is as follows. The RecF protein is involved in DNA metabolism; it is required for DNA replication and normal SOS inducibility. RecF binds preferentially to single-stranded, linear DNA. It also seems to bind ATP. In Crocosphaera subtropica (strain ATCC 51142 / BH68) (Cyanothece sp. (strain ATCC 51142)), this protein is DNA replication and repair protein RecF.